The primary structure comprises 218 residues: MDFIGAYSQEHLAFLWDGFLVTLYVAFISIILSFFFGLIAGTLRYAKVPVLSQLIAVLVETIRNLPLLLIIFFTFFALPEIGIKLEITAAAITALTIFESAMLSEIIRSGLKSIDKGQIEAARSSGLSYTQTLFFIVMPQALRRMVPPIVSQFISLLKDTSLAVVIALPELIHNAQIINGQSADGSYFFPIFLLAALMYFAVNYSLSLAARRLEVRQT.

3 helical membrane-spanning segments follow: residues Phe19–Ile39, Leu65–Leu85, and Phe188–Leu208. Residues Phe19–Ala210 enclose the ABC transmembrane type-1 domain.

This sequence belongs to the binding-protein-dependent transport system permease family. In terms of assembly, the complex is composed of two ATP-binding proteins (GlnQ), two transmembrane proteins (GlnM and GlnP) and a solute-binding protein (GlnH).

It is found in the cell membrane. Its function is as follows. Part of the ABC transporter complex GlnHMPQ involved in glutamine transport. Probably responsible for the translocation of the substrate across the membrane. In Bacillus subtilis (strain 168), this protein is Probable glutamine ABC transporter permease protein GlnP (glnP).